The following is a 176-amino-acid chain: PRL-1 phosphatase (176 aa).

The 154-residue stretch at 13-166 (APALIEYKGM…YKPKARLKHK (154 aa)) folds into the Tyrosine-protein phosphatase domain. Cys109 serves as the catalytic Phosphocysteine intermediate. Cys173 bears the Cysteine methyl ester mark. Cys173 carries S-farnesyl cysteine lipidation. The propeptide at 174 to 176 (SVQ) is removed in mature form.

Belongs to the protein-tyrosine phosphatase family. As to quaternary structure, homotrimer. Interacts with uex, possibly at the plasma membrane. Expressed in the adult head (at protein level). Expressed in neurons in the antennal lobe and V-glomeruli (at protein level). Expressed in dorsocentral neurons (at protein level).

It localises to the cytoplasm. The protein resides in the cell membrane. The protein localises to the apicolateral cell membrane. Its subcellular location is the cell projection. It is found in the axon. It catalyses the reaction O-phospho-L-tyrosyl-[protein] + H2O = L-tyrosyl-[protein] + phosphate. Its function is as follows. Probable phosphatase. Inhibits growth possibly by negatively regulating Src64B-induced growth. Regulates central nervous system circuit formation and stabilization of synapse-dense terminal arbors. In dorsocentral neurons, regulates synaptogenesis in terminal arbors via modulation of the insulin receptor pathway, likely upstream of Akt1, and via reduction of PtdIns(4,5)P2 (Phosphatidylinositol 4,5-bisphosphate) levels. In the nervous system, plays a protective role together with uex in response to olfactory carbon dioxide stimulation. In Drosophila melanogaster (Fruit fly), this protein is PRL-1 phosphatase.